A 219-amino-acid chain; its full sequence is 7-cyano-7-deazaguanine synthase (219 aa).

9–19 lines the ATP pocket; it reads YSGGMDSFTVL. 4 residues coordinate Zn(2+): C185, C193, C196, and C199.

The protein belongs to the QueC family. It depends on Zn(2+) as a cofactor.

It carries out the reaction 7-carboxy-7-deazaguanine + NH4(+) + ATP = 7-cyano-7-deazaguanine + ADP + phosphate + H2O + H(+). It functions in the pathway purine metabolism; 7-cyano-7-deazaguanine biosynthesis. Functionally, catalyzes the ATP-dependent conversion of 7-carboxy-7-deazaguanine (CDG) to 7-cyano-7-deazaguanine (preQ(0)). The sequence is that of 7-cyano-7-deazaguanine synthase from Marinomonas sp. (strain MWYL1).